A 67-amino-acid chain; its full sequence is DNA-directed RNA polymerase subunit omega (67 aa).

It belongs to the RNA polymerase subunit omega family. In terms of assembly, the RNAP catalytic core consists of 2 alpha, 1 beta, 1 beta' and 1 omega subunit. When a sigma factor is associated with the core the holoenzyme is formed, which can initiate transcription.

The catalysed reaction is RNA(n) + a ribonucleoside 5'-triphosphate = RNA(n+1) + diphosphate. Promotes RNA polymerase assembly. Latches the N- and C-terminal regions of the beta' subunit thereby facilitating its interaction with the beta and alpha subunits. The protein is DNA-directed RNA polymerase subunit omega of Bordetella avium (strain 197N).